The primary structure comprises 137 residues: MAREFSRTRRIGQQLQQELAFVLQRDMKDPRIGMVTVNDVDVSRDLSHAKVYVTFFEEDPQVIEAKLAALNTAAPYARTLVAGRMKLRVMPELRFIYDASLVEGMRMSNLVSKVIRDDEAKKGHIGDEPQEGQREED.

It belongs to the RbfA family. Monomer. Binds 30S ribosomal subunits, but not 50S ribosomal subunits or 70S ribosomes.

The protein resides in the cytoplasm. In terms of biological role, one of several proteins that assist in the late maturation steps of the functional core of the 30S ribosomal subunit. Associates with free 30S ribosomal subunits (but not with 30S subunits that are part of 70S ribosomes or polysomes). Required for efficient processing of 16S rRNA. May interact with the 5'-terminal helix region of 16S rRNA. In Shewanella amazonensis (strain ATCC BAA-1098 / SB2B), this protein is Ribosome-binding factor A.